A 358-amino-acid chain; its full sequence is UDP-N-acetylglucosamine--N-acetylmuramyl-(pentapeptide) pyrophosphoryl-undecaprenol N-acetylglucosamine transferase (358 aa).

Residues 11-13 (TGG), Arg-163, Ser-191, Ile-245, and Gln-290 each bind UDP-N-acetyl-alpha-D-glucosamine.

This sequence belongs to the glycosyltransferase 28 family. MurG subfamily.

The protein resides in the cell inner membrane. The catalysed reaction is di-trans,octa-cis-undecaprenyl diphospho-N-acetyl-alpha-D-muramoyl-L-alanyl-D-glutamyl-meso-2,6-diaminopimeloyl-D-alanyl-D-alanine + UDP-N-acetyl-alpha-D-glucosamine = di-trans,octa-cis-undecaprenyl diphospho-[N-acetyl-alpha-D-glucosaminyl-(1-&gt;4)]-N-acetyl-alpha-D-muramoyl-L-alanyl-D-glutamyl-meso-2,6-diaminopimeloyl-D-alanyl-D-alanine + UDP + H(+). It functions in the pathway cell wall biogenesis; peptidoglycan biosynthesis. Cell wall formation. Catalyzes the transfer of a GlcNAc subunit on undecaprenyl-pyrophosphoryl-MurNAc-pentapeptide (lipid intermediate I) to form undecaprenyl-pyrophosphoryl-MurNAc-(pentapeptide)GlcNAc (lipid intermediate II). This Herminiimonas arsenicoxydans protein is UDP-N-acetylglucosamine--N-acetylmuramyl-(pentapeptide) pyrophosphoryl-undecaprenol N-acetylglucosamine transferase.